Here is a 155-residue protein sequence, read N- to C-terminus: Ribonuclease H (155 aa).

The 142-residue stretch at 5–146 (DQKPVIIHTD…ADQLARDGLT (142 aa)) folds into the RNase H type-1 domain. Residues aspartate 14, glutamate 52, aspartate 74, and aspartate 138 each contribute to the Mg(2+) site. The interval 133-155 (ENERADQLARDGLTENRMKSRVK) is disordered.

It belongs to the RNase H family. As to quaternary structure, monomer. Mg(2+) serves as cofactor.

It localises to the cytoplasm. The catalysed reaction is Endonucleolytic cleavage to 5'-phosphomonoester.. Its function is as follows. Endonuclease that specifically degrades the RNA of RNA-DNA hybrids. The sequence is that of Ribonuclease H from Rhodopseudomonas palustris (strain ATCC BAA-98 / CGA009).